Here is a 342-residue protein sequence, read N- to C-terminus: viral G-protein coupled receptor (342 aa).

Residues 1–51 (MAAEDFLTIFLDDDESWNETLNMSGYDYSGNFSLEVSVCEMTTVVPYTWNV) are Extracellular-facing. Asparagine 18, asparagine 22, and asparagine 31 each carry an N-linked (GlcNAc...) asparagine; by host glycan. A helical transmembrane segment spans residues 52 to 72 (GILSLIFLINVLGNGLVTYIF). At 73 to 92 (CKHRSRAGAIDILLLGICLN) the chain is on the cytoplasmic side. Residues 93–113 (SLCLSISLLAEVLMFLFPNII) form a helical membrane-spanning segment. Residues 114–121 (STGLCRLE) are Extracellular-facing. A helical transmembrane segment spans residues 122 to 142 (IFFYYLYVYLDIFSVVCVSLV). Topologically, residues 143-159 (RYLLVAYSTRSWPKKQS) are cytoplasmic. A helical membrane pass occupies residues 160 to 180 (LGWVLTSAALLIALVLSGDAC). At 181 to 217 (RHRSRVVDPVSKQAMCYENAGNMTADWRLHVRTVSVT) the chain is on the extracellular side. Residues 218–238 (AGFLLPLALLILFYALTWCVV) traverse the membrane as a helical segment. Over 239–251 (RRTKLQARRKVRG) the chain is Cytoplasmic. Residues 252–272 (VIVAVVLLFFVFCFPYHVLNL) form a helical membrane-spanning segment. Residues 273-293 (LDTLLRRRWIRDSCYTRGLIN) lie on the Extracellular side of the membrane. The chain crosses the membrane as a helical span at residues 294 to 314 (VGLAVTSLLQALYSAVVPLIY). Topologically, residues 315–342 (SCLGSLFRQRMYGLFQSLRQSFMSGATT) are cytoplasmic.

The protein belongs to the G-protein coupled receptor 1 family. In terms of assembly, interacts with protein K7; this interaction promotes vGPCR proteasomal degradation. Interacts with host CADM1; this interaction is essential for chronic NF-kappa-B activation.

The protein localises to the host cell membrane. Functionally, receptor that signals constitutively via several signaling pathways including PI3K/AKT as well as mitogen- and stress-activated/MAP kinases. Promotes host cell proliferation and survival, modulates cell migration, stimulates angiogenesis, and recruits inflammatory cells, both in expressing cells and in neighboring cells. Maintains chronic activation of NF-kappa-B via interaction with host CADM1. The polypeptide is viral G-protein coupled receptor (ORF74) (Human herpesvirus 8 type P (isolate GK18) (HHV-8)).